We begin with the raw amino-acid sequence, 450 residues long: MREIISIHIGQAGIQVGNACWELYCLEHGINQDGTMPSDTTVGVAHDAFNTFFSETGAGKHVPRAIFVDLEPTVIDEVRTGAYRQLFHPEQLISGKEDAANNFARGHYTVGKEIVDLCLDRVRKLADNCTGLQGFLVFNAVGGGTGSGLGSLLLERLSVDYGKKSKLGFTIYPSPQVSTAVVEPYNSVLSTHSLLEHTDVAVLLDNEAIYDICRRSLDIERPTYTNLNRLISQIISSLTTSLRFDGAINVDVTEFQTNLVPYPRIHFMLSSYAPVISAEKAYHEQLSVPEITNAVFEPSSMMAKCDPRHGKYMACCLMYRGDVVPKDVNAAVATIKTKRTVQFVDWCPTGFKCGINYQPPSVVPGGDLAKVQRAVCMISNNTAVAEVFSRIDHKFDLMYAKRAFVHWYVGEGMEEGEFSEAREDLAALEKDYEEVGAEGADDEGDEGDDY.

GTP is bound by residues glutamine 11, glutamate 71, glycine 144, threonine 145, threonine 179, asparagine 206, and asparagine 228. Mg(2+) is bound at residue glutamate 71. Residue glutamate 254 is part of the active site.

Belongs to the tubulin family. As to quaternary structure, dimer of alpha and beta chains. A typical microtubule is a hollow water-filled tube with an outer diameter of 25 nm and an inner diameter of 15 nM. Alpha-beta heterodimers associate head-to-tail to form protofilaments running lengthwise along the microtubule wall with the beta-tubulin subunit facing the microtubule plus end conferring a structural polarity. Microtubules usually have 13 protofilaments but different protofilament numbers can be found in some organisms and specialized cells. Requires Mg(2+) as cofactor. Undergoes a tyrosination/detyrosination cycle, the cyclic removal and re-addition of a C-terminal tyrosine residue by the enzymes tubulin tyrosine carboxypeptidase (TTCP) and tubulin tyrosine ligase (TTL), respectively.

It is found in the cytoplasm. The protein resides in the cytoskeleton. It catalyses the reaction GTP + H2O = GDP + phosphate + H(+). Its function is as follows. Tubulin is the major constituent of microtubules, a cylinder consisting of laterally associated linear protofilaments composed of alpha- and beta-tubulin heterodimers. Microtubules grow by the addition of GTP-tubulin dimers to the microtubule end, where a stabilizing cap forms. Below the cap, tubulin dimers are in GDP-bound state, owing to GTPase activity of alpha-tubulin. This chain is Tubulin alpha-1 chain (TUBA1), found in Hordeum vulgare (Barley).